Here is a 135-residue protein sequence, read N- to C-terminus: Large ribosomal subunit protein uL16c (135 aa).

The protein belongs to the universal ribosomal protein uL16 family. In terms of assembly, part of the 50S ribosomal subunit.

Its subcellular location is the plastid. It localises to the chloroplast. The sequence is that of Large ribosomal subunit protein uL16c from Eucalyptus globulus subsp. globulus (Tasmanian blue gum).